We begin with the raw amino-acid sequence, 129 residues long: Putative membrane protein insertion efficiency factor (129 aa).

The protein belongs to the UPF0161 family.

It is found in the cell inner membrane. Could be involved in insertion of integral membrane proteins into the membrane. The chain is Putative membrane protein insertion efficiency factor from Rhodopseudomonas palustris (strain ATCC BAA-98 / CGA009).